The following is a 192-amino-acid chain: Charged multivesicular body protein 1 (192 aa).

Coiled coils occupy residues 7–35 and 102–125; these read QLKF…KLKK and NMDL…LDVQ. The disordered stretch occupies residues 164-192; it reads QMGSAPSEKVQQGETDELTERLNRLKQKN.

Belongs to the SNF7 family. As to quaternary structure, probable peripherally associated component of the endosomal sorting required for transport complex III (ESCRT-III).

Its subcellular location is the endosome membrane. Probable peripherally associated component of the endosomal sorting required for transport complex III (ESCRT-III) which is involved in multivesicular bodies (MVBs) formation and sorting of endosomal cargo proteins into MVBs. MVBs contain intraluminal vesicles (ILVs) that are generated by invagination and scission from the limiting membrane of the endosome and are delivered to lysosomes enabling degradation of membrane proteins. This is Charged multivesicular body protein 1 (chmp1) from Dictyostelium discoideum (Social amoeba).